A 189-amino-acid polypeptide reads, in one-letter code: Cytidylate kinase (189 aa).

Residue 7–15 (GPPGSGKTS) participates in ATP binding.

This sequence belongs to the cytidylate kinase family. Type 2 subfamily.

The protein localises to the cytoplasm. It carries out the reaction CMP + ATP = CDP + ADP. It catalyses the reaction dCMP + ATP = dCDP + ADP. This Saccharolobus islandicus (strain Y.N.15.51 / Yellowstone #2) (Sulfolobus islandicus) protein is Cytidylate kinase.